A 345-amino-acid chain; its full sequence is tRNA N6-adenosine threonylcarbamoyltransferase (345 aa).

Residues histidine 115 and histidine 119 each contribute to the Fe cation site. Substrate is bound by residues 137–141, aspartate 170, glycine 183, aspartate 187, and asparagine 276; that span reads LVSGG. Aspartate 306 contacts Fe cation.

Belongs to the KAE1 / TsaD family. It depends on Fe(2+) as a cofactor.

Its subcellular location is the cytoplasm. It catalyses the reaction L-threonylcarbamoyladenylate + adenosine(37) in tRNA = N(6)-L-threonylcarbamoyladenosine(37) in tRNA + AMP + H(+). Its function is as follows. Required for the formation of a threonylcarbamoyl group on adenosine at position 37 (t(6)A37) in tRNAs that read codons beginning with adenine. Is involved in the transfer of the threonylcarbamoyl moiety of threonylcarbamoyl-AMP (TC-AMP) to the N6 group of A37, together with TsaE and TsaB. TsaD likely plays a direct catalytic role in this reaction. The protein is tRNA N6-adenosine threonylcarbamoyltransferase of Pediococcus pentosaceus (strain ATCC 25745 / CCUG 21536 / LMG 10740 / 183-1w).